The chain runs to 437 residues: Chromosomal replication initiator protein DnaA (437 aa).

The interval 1-72 (MEQFNAFKSL…ESLYEGIKSV (72 aa)) is domain I, interacts with DnaA modulators. Positions 72-99 (VNFVNEQDFFFNLAKLEENSRDTLYQNS) are domain II. Positions 100–320 (GLSKNYTFQN…GIATKLLFFA (221 aa)) are domain III, AAA+ region. 4 residues coordinate ATP: G144, G146, K147, and T148. Residues 321–437 (KTSKQNLINT…LRDVITSLVI (117 aa)) are domain IV, binds dsDNA.

The protein belongs to the DnaA family. As to quaternary structure, oligomerizes as a right-handed, spiral filament on DNA at oriC.

The protein localises to the cytoplasm. In terms of biological role, plays an essential role in the initiation and regulation of chromosomal replication. ATP-DnaA binds to the origin of replication (oriC) to initiate formation of the DNA replication initiation complex once per cell cycle. Binds the DnaA box (a 9 base pair repeat at the origin) and separates the double-stranded (ds)DNA. Forms a right-handed helical filament on oriC DNA; dsDNA binds to the exterior of the filament while single-stranded (ss)DNA is stabiized in the filament's interior. The ATP-DnaA-oriC complex binds and stabilizes one strand of the AT-rich DNA unwinding element (DUE), permitting loading of DNA polymerase. After initiation quickly degrades to an ADP-DnaA complex that is not apt for DNA replication. Binds acidic phospholipids. In Mycoplasma genitalium (strain ATCC 33530 / DSM 19775 / NCTC 10195 / G37) (Mycoplasmoides genitalium), this protein is Chromosomal replication initiator protein DnaA.